Consider the following 899-residue polypeptide: Probable dipeptidyl-aminopeptidase B (899 aa).

The segment at 1–69 (MKLDRMRVGS…NHNGRTQGNY (69 aa)) is disordered. At 1 to 99 (MKLDRMRVGS…NGKSSQRRTL (99 aa)) the chain is on the cytoplasmic side. A compositionally biased stretch (low complexity) spans 32-43 (DSSSTASISLTL). A helical; Signal-anchor for type II membrane protein transmembrane segment spans residues 100–120 (IVFWLLVALCVGGWAVAFLFF). At 121–899 (VTSPGNKTST…KYFNLSFLGH (779 aa)) the chain is on the vacuolar side. Residues 128 to 139 (TSTSPHSGSNSP) show a composition bias toward polar residues. Positions 128 to 149 (TSTSPHSGSNSPEGDVTKPGIP) are disordered. N-linked (GlcNAc...) asparagine glycans are attached at residues N212, N308, and N360. S765 (charge relay system) is an active-site residue. N819, N824, and N827 each carry an N-linked (GlcNAc...) asparagine glycan. Active-site charge relay system residues include D842 and H875. N-linked (GlcNAc...) asparagine glycosylation occurs at N893.

This sequence belongs to the peptidase S9B family.

Its subcellular location is the vacuole membrane. The catalysed reaction is Release of an N-terminal dipeptide, Xaa-Yaa-|-Zaa-, from a polypeptide, preferentially when Yaa is Pro, provided Zaa is neither Pro nor hydroxyproline.. Its function is as follows. Type IV dipeptidyl-peptidase which removes N-terminal dipeptides sequentially from polypeptides having unsubstituted N-termini provided that the penultimate residue is proline. This chain is Probable dipeptidyl-aminopeptidase B (DAPB), found in Trichophyton verrucosum (strain HKI 0517).